The following is a 338-amino-acid chain: Holliday junction branch migration complex subunit RuvB (338 aa).

Residues 4 to 187 (ADRLIHAEPQ…FGIPLRLEFY (184 aa)) are large ATPase domain (RuvB-L). ATP is bound by residues arginine 27, glycine 68, lysine 71, threonine 72, threonine 73, 134–136 (EDY), arginine 177, tyrosine 187, and arginine 224. Threonine 72 is a binding site for Mg(2+). Positions 188–258 (NVKDLSSIVT…VAELALDMLD (71 aa)) are small ATPAse domain (RuvB-S). Residues 261 to 338 (SEGFDYMDRK…RHFDIIQPEK (78 aa)) are head domain (RuvB-H). DNA-binding residues include arginine 297, arginine 316, and arginine 321.

This sequence belongs to the RuvB family. In terms of assembly, homohexamer. Forms an RuvA(8)-RuvB(12)-Holliday junction (HJ) complex. HJ DNA is sandwiched between 2 RuvA tetramers; dsDNA enters through RuvA and exits via RuvB. An RuvB hexamer assembles on each DNA strand where it exits the tetramer. Each RuvB hexamer is contacted by two RuvA subunits (via domain III) on 2 adjacent RuvB subunits; this complex drives branch migration. In the full resolvosome a probable DNA-RuvA(4)-RuvB(12)-RuvC(2) complex forms which resolves the HJ.

It is found in the cytoplasm. It carries out the reaction ATP + H2O = ADP + phosphate + H(+). The RuvA-RuvB-RuvC complex processes Holliday junction (HJ) DNA during genetic recombination and DNA repair, while the RuvA-RuvB complex plays an important role in the rescue of blocked DNA replication forks via replication fork reversal (RFR). RuvA specifically binds to HJ cruciform DNA, conferring on it an open structure. The RuvB hexamer acts as an ATP-dependent pump, pulling dsDNA into and through the RuvAB complex. RuvB forms 2 homohexamers on either side of HJ DNA bound by 1 or 2 RuvA tetramers; 4 subunits per hexamer contact DNA at a time. Coordinated motions by a converter formed by DNA-disengaged RuvB subunits stimulates ATP hydrolysis and nucleotide exchange. Immobilization of the converter enables RuvB to convert the ATP-contained energy into a lever motion, pulling 2 nucleotides of DNA out of the RuvA tetramer per ATP hydrolyzed, thus driving DNA branch migration. The RuvB motors rotate together with the DNA substrate, which together with the progressing nucleotide cycle form the mechanistic basis for DNA recombination by continuous HJ branch migration. Branch migration allows RuvC to scan DNA until it finds its consensus sequence, where it cleaves and resolves cruciform DNA. This Shewanella woodyi (strain ATCC 51908 / MS32) protein is Holliday junction branch migration complex subunit RuvB.